We begin with the raw amino-acid sequence, 578 residues long: V-type ATP synthase alpha chain (578 aa).

228–235 (GPFGSGKT) provides a ligand contact to ATP.

This sequence belongs to the ATPase alpha/beta chains family.

It carries out the reaction ATP + H2O + 4 H(+)(in) = ADP + phosphate + 5 H(+)(out). Functionally, produces ATP from ADP in the presence of a proton gradient across the membrane. The V-type alpha chain is a catalytic subunit. The chain is V-type ATP synthase alpha chain from Thermus thermophilus (strain ATCC BAA-163 / DSM 7039 / HB27).